The sequence spans 537 residues: P2Y purinoceptor 4 (537 aa).

Topologically, residues 1 to 49 (MTEDIMATSYPTFLTTPYLPMKLLMNLTNDTEDICVFDEGFKFLLLPVS) are extracellular. Asparagine 26 and asparagine 29 each carry an N-linked (GlcNAc...) asparagine glycan. Residues 50 to 70 (YSAVFMVGLPLNIAAMWIFIA) traverse the membrane as a helical segment. Residues 71-79 (KMRPWNPTT) lie on the Cytoplasmic side of the membrane. A helical membrane pass occupies residues 80–100 (VYMFNLALSDTLYVLSLPTLV). Over 101 to 118 (YYYADKNNWPFGEVLCKL) the chain is Extracellular. Cysteine 116 and cysteine 193 are oxidised to a cystine. A helical transmembrane segment spans residues 119 to 139 (VRFLFYANLYSSILFLTCISV). The Cytoplasmic segment spans residues 140 to 161 (HRYRGVCHPITSLRRMNAKHAY). The chain crosses the membrane as a helical span at residues 162 to 182 (VICALVWLSVTLCLVPNLIFV). The Extracellular portion of the chain corresponds to 183 to 210 (TVSPKVKNTICHDTTRPEDFARYVEYST). A helical transmembrane segment spans residues 211 to 231 (AIMCLLFGIPCLIIAGCYGLM). The Cytoplasmic portion of the chain corresponds to 232–254 (TRELMKPIVSGNQQTLPSYKKRS). Residues 255–275 (IKTIIFVMIAFAICFMPFHIT) traverse the membrane as a helical segment. At 276 to 292 (RTLYYYARLLGIKCYAL) the chain is on the extracellular side. A helical membrane pass occupies residues 293–316 (NVINVTYKVTRPLASANSCIDPIL). Over 317 to 537 (YFLANDRYRR…EKELQNFPKA (221 aa)) the chain is Cytoplasmic. The interval 401 to 505 (NRRSTIKRNS…GEGTSTWNLL (105 aa)) is disordered. Composition is skewed to basic and acidic residues over residues 409–423 (NSTD…RHGE) and 431–447 (VVEK…RKTT). A compositionally biased stretch (polar residues) spans 448-465 (EQSSKTNAEQDELQTQID).

It belongs to the G-protein coupled receptor 1 family.

The protein resides in the cell membrane. Receptor for extracellular ATP, UTP, CTP, GTP and ITP. The activity of this receptor is mediated by G proteins which activate a phosphatidylinositol-calcium second messenger system. May play a key role in the early development of neural tissue. The sequence is that of P2Y purinoceptor 4 (p2ry4) from Xenopus laevis (African clawed frog).